Consider the following 310-residue polypeptide: Ribose-phosphate pyrophosphokinase (310 aa).

ATP is bound by residues 34 to 36 (DQE) and 93 to 94 (RQ). Residues H127 and D167 each contribute to the Mg(2+) site. The active site involves K190. D-ribose 5-phosphate contacts are provided by residues R192, D216, and 220-224 (DSGGT).

The protein belongs to the ribose-phosphate pyrophosphokinase family. Class I subfamily. Homohexamer. It depends on Mg(2+) as a cofactor.

It localises to the cytoplasm. The catalysed reaction is D-ribose 5-phosphate + ATP = 5-phospho-alpha-D-ribose 1-diphosphate + AMP + H(+). The protein operates within metabolic intermediate biosynthesis; 5-phospho-alpha-D-ribose 1-diphosphate biosynthesis; 5-phospho-alpha-D-ribose 1-diphosphate from D-ribose 5-phosphate (route I): step 1/1. Its function is as follows. Involved in the biosynthesis of the central metabolite phospho-alpha-D-ribosyl-1-pyrophosphate (PRPP) via the transfer of pyrophosphoryl group from ATP to 1-hydroxyl of ribose-5-phosphate (Rib-5-P). The protein is Ribose-phosphate pyrophosphokinase of Rhizobium meliloti (strain 1021) (Ensifer meliloti).